A 613-amino-acid chain; its full sequence is tRNA (uracil-5-)-methyltransferase homolog A (613 aa).

Residues 1-46 (MSEPAAEVPEPMEDCGQDASAVPSSAAPLCQKEEAGPGPAAGPGTQ) form a disordered region. Residues 63-136 (FKLELQNVPR…CPLSVRLARP (74 aa)) enclose the RRM domain. A coiled-coil region spans residues 170–200 (YTEQLEQKRLECERVLQKLAKEIGNTNRALL). The residue at position 368 (S368) is a Phosphoserine. Q401, E451, and D500 together coordinate S-adenosyl-L-methionine. Catalysis depends on C528, which acts as the Nucleophile. E571 serves as the catalytic Proton acceptor.

The protein belongs to the class I-like SAM-binding methyltransferase superfamily. RNA M5U methyltransferase family. Widely expressed at low level. Expressed at higher level in proliferating cells.

The protein localises to the cytoplasm. The protein resides in the cytosol. The catalysed reaction is uridine(54) in tRNA + S-adenosyl-L-methionine = 5-methyluridine(54) in tRNA + S-adenosyl-L-homocysteine + H(+). It catalyses the reaction a uridine in mRNA + S-adenosyl-L-methionine = a 5-methyluridine in mRNA + S-adenosyl-L-homocysteine + H(+). In terms of biological role, S-adenosyl-L-methionine-dependent methyltransferase that catalyzes the formation of 5-methyl-uridine in tRNAs and some mRNAs. Mainly catalyzes the methylation of uridine at position 54 (m5U54) in cytosolic tRNAs. Also able to mediate the formation of 5-methyl-uridine in some mRNAs. In Mus musculus (Mouse), this protein is tRNA (uracil-5-)-methyltransferase homolog A.